The primary structure comprises 1135 residues: Putative beta-hexosaminidase (1135 aa).

Positions 1–23 (MKWVKSGVGILGILLTICHAVTS) are cleaved as a signal peptide. Disordered regions lie at residues 970 to 1082 (AHPP…LPGQ) and 1107 to 1135 (QMRGQGQIPQRTQGAAAGAGQSRIPQQAG). The span at 986 to 1003 (NMPPPFPPRPPFGPPMLP) shows a compositional bias: pro residues. 2 stretches are compositionally biased toward low complexity: residues 1004–1026 (PGQMRALGQQAGQALRGQGTALG) and 1043–1073 (TGQAAGTGVAGQTGQQPSTAGQGTQQGLPGQ).

This sequence belongs to the glycosyl hydrolase 20 family. In terms of tissue distribution, prismatic layer of shell (at protein level). Expressed primarily in the mantle with highest level in the mantle edge and lower level in the mantle pallium.

Its subcellular location is the secreted. It carries out the reaction Hydrolysis of terminal non-reducing N-acetyl-D-hexosamine residues in N-acetyl-beta-D-hexosaminides.. It participates in glycan degradation; chitin degradation. In Margaritifera margaritifera (Freshwater pearl mussel), this protein is Putative beta-hexosaminidase.